Here is a 233-residue protein sequence, read N- to C-terminus: MNKILLQCDNLCKRYQEGSVQTDVLHNVSFSVSEGEMMAIVGSSGSGKSTLLHLLGGLDTPTSGDVIFNGQPMSKLSSAAKAELRNQKLGFIYQFHHLLPDFTALENVAMPLLIGKKKPAEINSRALEMLKAVGLDHRANHRPSELSGGERQRVAIARALVNNPRLVLADEPTGNLDARNADSIFQLLGELNRLQGTAFLVVTHDLQLAKRMSRQLEMRDGRLTAELSLMGAE.

An ABC transporter domain is found at 6-233 (LQCDNLCKRY…TAELSLMGAE (228 aa)). 42–49 (GSSGSGKS) provides a ligand contact to ATP.

This sequence belongs to the ABC transporter superfamily. Lipoprotein translocase (TC 3.A.1.125) family. As to quaternary structure, the complex is composed of two ATP-binding proteins (LolD) and two transmembrane proteins (LolC and LolE).

The protein resides in the cell inner membrane. Its function is as follows. Part of the ABC transporter complex LolCDE involved in the translocation of mature outer membrane-directed lipoproteins, from the inner membrane to the periplasmic chaperone, LolA. Responsible for the formation of the LolA-lipoprotein complex in an ATP-dependent manner. This chain is Lipoprotein-releasing system ATP-binding protein LolD, found in Shigella dysenteriae serotype 1 (strain Sd197).